Consider the following 119-residue polypeptide: MARSVVAALLVLLSLSGLEAIQHAPKIQVYSRHPAENGKPNYLNCYVSGFHPSDIEVDLLKNGQKIENVEHSDLSFSKDWSFYLLYYTEFTPNEKDEYACRVSHVTFPTPKTVKWDRNM.

The signal sequence occupies residues 1-20 (MARSVVAALLVLLSLSGLEA). An Ig-like C1-type domain is found at 25-114 (PKIQVYSRHP…VTFPTPKTVK (90 aa)). A disulfide bond links C45 and C100.

Belongs to the beta-2-microglobulin family. As to quaternary structure, heterodimer of an alpha chain and a beta chain. Beta-2-microglobulin is the beta-chain of major histocompatibility complex class I molecules.

Its subcellular location is the secreted. Functionally, component of the class I major histocompatibility complex (MHC). Involved in the presentation of peptide antigens to the immune system. The protein is Beta-2-microglobulin (B2M) of Saimiri boliviensis boliviensis (Bolivian squirrel monkey).